An 88-amino-acid chain; its full sequence is Antitoxin VapB3 (88 aa).

Its function is as follows. Antitoxin component of a type II toxin-antitoxin (TA) system. The protein is Antitoxin VapB3 (vapB3) of Mycobacterium tuberculosis (strain CDC 1551 / Oshkosh).